Here is a 437-residue protein sequence, read N- to C-terminus: MASLGPSPWAPLSTPAPTAQLLLFLLLQVSAQPQGLSGMQGEPSLGDSSSGEDELGVDVLPSEEDAPEEADPPDGEDPPEVNSEDRMEESLGLEDLSTPEAPEHSQGSHGDEKGGGHSHWSYGGTLLWPQVSPACAGRFQSPVDIRLERTAFCRTLQPLELLGYELQPLPELSLSNNGHTVQLTLPPGLKMALGPGQEYRALQLHLHWGTSDHPGSEHTVNGHRFPAEIHVVHLSTAFSELHEALGRPGGLAVLAAFLQESPEENSAYEQLLSHLEEISEEGSKIEIPGLDVSALLPSDLSRYYRYEGSLTTPPCSQGVIWTVFNETVKLSAKQLHTLSVSLWGPRDSRLQLNFRATQPLNGRTIEASFPAAEDSSPEPVHVNSCFTAGDILALVFGLLFAVTSIAFLLQLRRQHRHRSGTKDRVSYSPAEMTETGA.

The signal sequence occupies residues 1–31 (MASLGPSPWAPLSTPAPTAQLLLFLLLQVSA). The tract at residues 32–95 (QPQGLSGMQG…RMEESLGLED (64 aa)) is proteoglycan-like (PG). The Extracellular segment spans residues 32–390 (QPQGLSGMQG…HVNSCFTAGD (359 aa)). The segment at 34–118 (QGLSGMQGEP…HGDEKGGGHS (85 aa)) is disordered. Acidic residues predominate over residues 50–79 (SGEDELGVDVLPSEEDAPEEADPPDGEDPP). The catalytic stretch occupies residues 96–390 (LSTPEAPEHS…HVNSCFTAGD (295 aa)). Residue Thr-98 is glycosylated (O-linked (GlcNAc...) threonine). One can recognise an Alpha-carbonic anhydrase domain in the interval 118-369 (SHWSYGGTLL…LNGRTIEASF (252 aa)). A disulfide bond links Cys-135 and Cys-315. The active-site Proton donor/acceptor is the His-179. 3 residues coordinate Zn(2+): His-205, His-207, and His-230. 311 to 312 (TT) contacts substrate. The N-linked (GlcNAc...) asparagine glycan is linked to Asn-325. The helical transmembrane segment at 391-411 (ILALVFGLLFAVTSIAFLLQL) threads the bilayer. Residues 412 to 437 (RRQHRHRSGTKDRVSYSPAEMTETGA) are Cytoplasmic-facing. The residue at position 427 (Tyr-427) is a Phosphotyrosine.

The protein belongs to the alpha-carbonic anhydrase family. As to quaternary structure, forms oligomers linked by disulfide bonds. Zn(2+) serves as cofactor. Post-translationally, asn-325 bears high-mannose type glycan structures.

It localises to the nucleus. The protein resides in the nucleolus. It is found in the cell membrane. The protein localises to the cell projection. Its subcellular location is the microvillus membrane. The catalysed reaction is hydrogencarbonate + H(+) = CO2 + H2O. Its activity is regulated as follows. Inhibited by acetazolamide. Functionally, catalyzes the interconversion between carbon dioxide and water and the dissociated ions of carbonic acid (i.e. bicarbonate and hydrogen ions). The protein is Carbonic anhydrase 9 (Ca9) of Mus musculus (Mouse).